The sequence spans 184 residues: Fruit protein pKIWI501 (184 aa).

Residues 1 to 184 (MATVEVTPAV…TEVPVDKTEE (184 aa)) are disordered. Low complexity-rich tracts occupy residues 25 to 36 (PQEPQPEAAVAA) and 53 to 65 (PEAVEAPEEPAAT). Acidic residues predominate over residues 72 to 92 (EVAEAEEEVVEEPQEVPEEPV). Positions 96–119 (AAKEVEATEGKAEPTGEMKDKTPE) are enriched in basic and acidic residues. The span at 120–156 (ATDAPEAPAAAEEPTDAPEAPAVAEEPTNAPEAPAVG) shows a compositional bias: low complexity. Over residues 159–168 (PEAKEGKPDE) the composition is skewed to basic and acidic residues.

This sequence to H.brasiliensis latex allergen Hev b 5.

This chain is Fruit protein pKIWI501, found in Actinidia deliciosa (Kiwi).